A 379-amino-acid chain; its full sequence is MKILRKTHPLLKIVNHSFIDLPTPSNISSWWNFGSLLGMCLVIQILTGLFLAMHYTSDTATAFSSVAHICRDVNYGWLIRYLHANGASMFFICLFIHVGRGIYYGSYVLSETWNIGIILLLTTMATAFVGYVLPWGQMSFWGATVITNLLSAIPYIGNTLVEWIWGGFSVDKATLTRFFAFHFILPFIITALVLVHLLFLHETGSNNPSGLNSDSDKIPFHPYYTIKDLLGIFLLLMTLMILALFFPDILGDPDNFTPANPLNTPAHIKPEWYFLFAYAILRSIPNKLGGVLALVLSILILATFPLLNTSKQHGLIFRPITQTIYWIFIANLLVLTWIGGQPVEYPFTTIGQIASITYFTIIVIIMPVSNTIENNIIKL.

4 helical membrane passes run 33-53 (FGSL…FLAM), 77-98 (WLIR…FIHV), 113-133 (WNIG…GYVL), and 178-198 (FFAF…VHLL). Positions 83 and 97 each coordinate heme b. The heme b site is built by His182 and His196. Residue His201 coordinates a ubiquinone. 4 consecutive transmembrane segments (helical) span residues 226-246 (IKDL…ALFF), 288-308 (LGGV…PLLN), 320-340 (ITQT…WIGG), and 347-367 (FTTI…IIMP).

This sequence belongs to the cytochrome b family. In terms of assembly, the cytochrome bc1 complex contains 11 subunits: 3 respiratory subunits (MT-CYB, CYC1 and UQCRFS1), 2 core proteins (UQCRC1 and UQCRC2) and 6 low-molecular weight proteins (UQCRH/QCR6, UQCRB/QCR7, UQCRQ/QCR8, UQCR10/QCR9, UQCR11/QCR10 and a cleavage product of UQCRFS1). This cytochrome bc1 complex then forms a dimer. The cofactor is heme b.

The protein localises to the mitochondrion inner membrane. Component of the ubiquinol-cytochrome c reductase complex (complex III or cytochrome b-c1 complex) that is part of the mitochondrial respiratory chain. The b-c1 complex mediates electron transfer from ubiquinol to cytochrome c. Contributes to the generation of a proton gradient across the mitochondrial membrane that is then used for ATP synthesis. This is Cytochrome b (MT-CYB) from Deltamys kempi (Kemp's grass mouse).